A 183-amino-acid polypeptide reads, in one-letter code: Glutathione-regulated potassium-efflux system ancillary protein KefG (183 aa).

The protein belongs to the NAD(P)H dehydrogenase (quinone) family. KefG subfamily. In terms of assembly, interacts with KefB.

Its subcellular location is the cell inner membrane. It carries out the reaction a quinone + NADH + H(+) = a quinol + NAD(+). It catalyses the reaction a quinone + NADPH + H(+) = a quinol + NADP(+). In terms of biological role, regulatory subunit of a potassium efflux system that confers protection against electrophiles. Required for full activity of KefB. The protein is Glutathione-regulated potassium-efflux system ancillary protein KefG of Shigella flexneri serotype 5b (strain 8401).